A 224-amino-acid polypeptide reads, in one-letter code: uncharacterized protein (224 aa).

The S-adenosyl-L-methionine site is built by G177, I197, and L206.

It belongs to the class IV-like SAM-binding methyltransferase superfamily. RNA methyltransferase TrmH family.

This is an uncharacterized protein from Archaeoglobus fulgidus (strain ATCC 49558 / DSM 4304 / JCM 9628 / NBRC 100126 / VC-16).